Consider the following 335-residue polypeptide: Photosystem II assembly lipoprotein Ycf48 (335 aa).

The signal sequence occupies residues Met-1–Gly-23. A lipid anchor (N-palmitoyl cysteine) is attached at Cys-24. Cys-24 carries the S-diacylglycerol cysteine lipid modification.

The protein belongs to the Ycf48 family. Part of early PSII assembly complexes which includes D1 (psbA) and PsbI; not found in mature PSII. Binds to the lumenal side of PSII complexes. Interacts with YidC.

The protein resides in the cellular thylakoid membrane. Its function is as follows. A factor required for optimal assembly of photosystem II (PSII), acting in the early stages of PSII assembly. Also plays a role in replacement of photodamaged D1 (psbA). Assists YidC in synthesis of chlorophyll-binding proteins. The chain is Photosystem II assembly lipoprotein Ycf48 from Prochlorococcus marinus (strain MIT 9313).